A 262-amino-acid chain; its full sequence is uncharacterized protein (262 aa).

A BTB domain is found at 5–107; the sequence is PLISLDVEGV…MIEHKLRTFC (103 aa). One can recognise a CRIB domain in the interval 182–195; the sequence is ISLPRNFTHIAHVG.

This is an uncharacterized protein from Caenorhabditis elegans.